The sequence spans 315 residues: N-acetyl-D-glutamate racemase (315 aa).

The Mg(2+) site is built by aspartate 147, glutamate 173, and aspartate 196.

It belongs to the mandelate racemase/muconate lactonizing enzyme family. Requires Mg(2+) as cofactor.

The catalysed reaction is N-acetyl-D-glutamate = N-acetyl-L-glutamate. The protein operates within amino-acid degradation. Its function is as follows. Racemase involved in a deamination-independent D-glutamate degradation pathway, named the DgcN-DgcA pathway. Catalyzes the conversion of N-acetyl-D-glutamate to N-acetyl-L-glutamate. Also shows racemase activity towards the dipeptide L-Ala-D-Glu, a key constituent of peptidoglycan muropeptides, suggesting that it may also contribute to the degradation of peptidoglycans. In Pseudoalteromonas sp, this protein is N-acetyl-D-glutamate racemase.